A 634-amino-acid chain; its full sequence is Zinc finger and BTB domain-containing protein 22 (634 aa).

The region spanning 57–121 (CDVSIRVQGR…AYTGRLSMAA (65 aa)) is the BTB domain. 2 disordered regions span residues 167–247 (TVPG…APVV) and 308–461 (APTP…GTSV). The segment covering 180 to 198 (TVAPATMGSARSHASSRAS) has biased composition (low complexity). A compositionally biased stretch (polar residues) spans 199–209 (ENQSPSSSNYF). The residue at position 202 (Ser202) is a Phosphoserine. Residues 217 to 229 (FSSSSQEAFAASA) are compositionally biased toward low complexity. Acidic residues predominate over residues 317–340 (PDLEEEEEEEDLVLTCEDDEDEEL). The segment covering 452 to 461 (GAVTVGGTSV) has biased composition (low complexity). The C2H2-type 1; atypical zinc-finger motif lies at 486–507 (FLCHCGKAFSHKSMRDRHVNMH). C2H2-type zinc fingers lie at residues 513–535 (FDCP…MKTH) and 541–562 (YECG…HRGH). Positions 568 to 634 (RLGGVGAVPG…MGFGGGGGAN (67 aa)) are disordered. Over residues 608–618 (PPSSRRVWSPP) the composition is skewed to low complexity.

This sequence belongs to the krueppel C2H2-type zinc-finger protein family.

Its subcellular location is the nucleus. In terms of biological role, may be involved in transcriptional regulation. In Homo sapiens (Human), this protein is Zinc finger and BTB domain-containing protein 22 (ZBTB22).